A 95-amino-acid polypeptide reads, in one-letter code: L-amino-acid oxidase (95 aa).

It belongs to the flavin monoamine oxidase family. FIG1 subfamily. Homodimer; non-covalently linked. It depends on FAD as a cofactor. Post-translationally, N-glycosylated. In terms of tissue distribution, expressed by the venom gland.

Its subcellular location is the secreted. It catalyses the reaction an L-alpha-amino acid + O2 + H2O = a 2-oxocarboxylate + H2O2 + NH4(+). The enzyme catalyses L-leucine + O2 + H2O = 4-methyl-2-oxopentanoate + H2O2 + NH4(+). It carries out the reaction L-phenylalanine + O2 + H2O = 3-phenylpyruvate + H2O2 + NH4(+). The catalysed reaction is L-tryptophan + O2 + H2O = indole-3-pyruvate + H2O2 + NH4(+). It catalyses the reaction L-methionine + O2 + H2O = 4-methylsulfanyl-2-oxobutanoate + H2O2 + NH4(+). The enzyme catalyses L-arginine + O2 + H2O = 5-guanidino-2-oxopentanoate + H2O2 + NH4(+). Catalyzes an oxidative deamination of predominantly hydrophobic and aromatic L-amino acids, thus producing hydrogen peroxide that may contribute to the diverse toxic effects of this enzyme. Is highly active on L-Met, L-Leu, L-Phe, L-Trp, and L-Arg, and no weakly or no active on L-His, L-Tyr, L-Ile, L-Gln, and L-Lys. Exhibits diverse biological activities, such as antibacterial activity against both Gram-positive (B.subtilis) and Gram-negative (E.coli) bacteria, and inhibition of ADP- or collagen-induced platelet aggregation. Effects of snake L-amino oxidases on platelets are controversial, since they either induce aggregation or inhibit agonist-induced aggregation. These different effects are probably due to different experimental conditions. This protein may also induce hemorrhage, hemolysis, edema, apoptosis, and have antiparasitic activities. This chain is L-amino-acid oxidase, found in Naja oxiana (Central Asian cobra).